Here is a 430-residue protein sequence, read N- to C-terminus: Tol-Pal system protein TolB (430 aa).

Positions 1-21 (MKQALRVAVSFFMLWAAVLHA) are cleaved as a signal peptide.

It belongs to the TolB family. The Tol-Pal system is composed of five core proteins: the inner membrane proteins TolA, TolQ and TolR, the periplasmic protein TolB and the outer membrane protein Pal. They form a network linking the inner and outer membranes and the peptidoglycan layer.

It is found in the periplasm. Functionally, part of the Tol-Pal system, which plays a role in outer membrane invagination during cell division and is important for maintaining outer membrane integrity. TolB occupies a key intermediary position in the Tol-Pal system because it communicates directly with both membrane-embedded components, Pal in the outer membrane and TolA in the inner membrane. This chain is Tol-Pal system protein TolB, found in Enterobacter sp. (strain 638).